A 210-amino-acid chain; its full sequence is Glutathione S-transferase P 10 (210 aa).

The GST N-terminal domain maps to 2–81 (AVPQLYYFTI…HLGRVHGLNG (80 aa)). Residues Y8, W41, K45, 52-53 (QL), and 65-66 (QT) each bind glutathione. The 118-residue stretch at 83-200 (NEQEATFLDM…YLEKRKADKV (118 aa)) folds into the GST C-terminal domain.

Belongs to the GST superfamily. Pi family. In terms of assembly, homodimer. Expressed in cells at the mouth and adjacent to the pharyngeal bulbs of the head and also in the tail.

The catalysed reaction is RX + glutathione = an S-substituted glutathione + a halide anion + H(+). Its function is as follows. Conjugation of reduced glutathione to a wide number of exogenous and endogenous hydrophobic electrophiles. Responsible for approximately one-third of 4-hydroxy-2-nonenal conjugation. May play a role in the detoxification of reactive oxygen species produced during pathogenic bacterial infection. This Caenorhabditis elegans protein is Glutathione S-transferase P 10.